We begin with the raw amino-acid sequence, 264 residues long: Flagellar brake protein YcgR 1 (264 aa).

One can recognise a PilZ domain in the interval 132 to 249; the sequence is QRREFFRLES…RLAMIERYIA (118 aa).

Belongs to the YcgR family. As to quaternary structure, monomer. Interacts with the flagellar basal bodies.

It is found in the bacterial flagellum basal body. Its function is as follows. Acts as a flagellar brake, regulating swimming and swarming in a bis-(3'-5') cyclic diguanylic acid (c-di-GMP)-dependent manner. Binds 1 c-di-GMP dimer per subunit. Increasing levels of c-di-GMP lead to decreased motility. This Dechloromonas aromatica (strain RCB) protein is Flagellar brake protein YcgR 1.